Here is a 109-residue protein sequence, read N- to C-terminus: UPF0060 membrane protein PA14_21660 (109 aa).

Helical transmembrane passes span 5-25, 27-47, 59-79, and 84-104; these read LWFV…YLWL, LGKS…FALL, AYAA…AFVE, and LWSD…VLFG.

This sequence belongs to the UPF0060 family.

Its subcellular location is the cell inner membrane. This is UPF0060 membrane protein PA14_21660 from Pseudomonas aeruginosa (strain UCBPP-PA14).